A 247-amino-acid polypeptide reads, in one-letter code: MNVLPCSINTLKGLYDISEVEVGQHFYWQIGGFQVHAQVLITSWVVIAILLGSAAIAVRNPQTIPTDGQNFFEYVLEFIRDLTKTQIGEEYGPWVPFIGTMFLFIFVSNWSGALLPRKIIQLPHGELAAPTNDINTTVALALLTSVAYFYAGLTKKGLGYFGKYIQPTPILLPINILEDFTKPLSLSFRLFGNILADELVVVVLVSLVPLVVPIPVMFLGLFTSGIQALIFATLAAAYIGESMEGHH.

5 helical membrane passes run 38-58 (QVLI…AIAV), 95-115 (VPFI…GALL), 134-154 (INTT…AGLT), 199-219 (LVVV…VMFL), and 220-240 (GLFT…AYIG).

It belongs to the ATPase A chain family. In terms of assembly, F-type ATPases have 2 components, CF(1) - the catalytic core - and CF(0) - the membrane proton channel. CF(1) has five subunits: alpha(3), beta(3), gamma(1), delta(1), epsilon(1). CF(0) has four main subunits: a, b, b' and c.

Its subcellular location is the plastid. It localises to the chloroplast thylakoid membrane. In terms of biological role, key component of the proton channel; it plays a direct role in the translocation of protons across the membrane. This is ATP synthase subunit a, chloroplastic from Calycanthus floridus var. glaucus (Eastern sweetshrub).